We begin with the raw amino-acid sequence, 230 residues long: 2,3-bisphosphoglycerate-dependent phosphoglycerate mutase (230 aa).

Residues 8–15 (RHGQSIWN), 21–22 (TG), Arg-60, 87–90 (ERHY), Lys-98, and 114–115 (RR) each bind substrate. His-9 functions as the Tele-phosphohistidine intermediate in the catalytic mechanism. Glu-87 functions as the Proton donor/acceptor in the catalytic mechanism. The segment at 117-143 (YDTPPPALDAEDERHPRHDPRYAGLDP) is disordered. Residues 128-137 (DERHPRHDPR) are compositionally biased toward basic and acidic residues. 183-184 (GN) is a binding site for substrate.

It belongs to the phosphoglycerate mutase family. BPG-dependent PGAM subfamily. As to quaternary structure, homodimer.

It carries out the reaction (2R)-2-phosphoglycerate = (2R)-3-phosphoglycerate. Its pathway is carbohydrate degradation; glycolysis; pyruvate from D-glyceraldehyde 3-phosphate: step 3/5. Functionally, catalyzes the interconversion of 2-phosphoglycerate and 3-phosphoglycerate. In Halorhodospira halophila (strain DSM 244 / SL1) (Ectothiorhodospira halophila (strain DSM 244 / SL1)), this protein is 2,3-bisphosphoglycerate-dependent phosphoglycerate mutase.